A 343-amino-acid chain; its full sequence is 3-hydroxy-3-methylglutaryl-CoA lyase, cytoplasmic (343 aa).

A lipid anchor (N-myristoyl glycine) is attached at Gly-2. Residues 48-315 (VKIVEVGPRD…NTGVDLYKVM (268 aa)) form the Pyruvate carboxyltransferase domain. Arg-56 serves as a coordination point for substrate. Residues Asp-57, His-248, and His-250 each coordinate a divalent metal cation. Cys-281 is a catalytic residue. Position 290 (Asn-290) interacts with a divalent metal cation.

The protein belongs to the HMG-CoA lyase family. A divalent metal cation is required as a cofactor.

Its subcellular location is the cytoplasm. It is found in the cytosol. The protein localises to the endoplasmic reticulum membrane. The catalysed reaction is (3S)-3-hydroxy-3-methylglutaryl-CoA = acetoacetate + acetyl-CoA. It participates in metabolic intermediate metabolism; (S)-3-hydroxy-3-methylglutaryl-CoA degradation; acetoacetate from (S)-3-hydroxy-3-methylglutaryl-CoA: step 1/1. Non-mitochondrial 3-hydroxy-3-methylglutaryl-CoA lyase that catalyzes a cation-dependent cleavage of (S)-3-hydroxy-3-methylglutaryl-CoA into acetyl-CoA and acetoacetate, a key step in ketogenesis, the products of which support energy production in nonhepatic animal tissues. The sequence is that of 3-hydroxy-3-methylglutaryl-CoA lyase, cytoplasmic (Hmgcll1) from Mus musculus (Mouse).